The sequence spans 62 residues: Cuticle protein 6.4 (62 aa).

In terms of biological role, component of the cuticle of migratory locust which contains more than 100 different structural proteins. The polypeptide is Cuticle protein 6.4 (Locusta migratoria (Migratory locust)).